We begin with the raw amino-acid sequence, 555 residues long: MTTIADLFTKYNCTNCQDDIQGIRVHCAECENFDLCLQCFAAGAEIGAHQNNHSYQFMDTGTSILSVFRGKGAWTAREEIRLLDAIEQYGFGNWEDISKHIETKSAEDAKEEYVNKFVNGTIGRATWTPAQSQRPRLIDHTGDDDAGPLGTNALSTLPPLEINSDEAMQLGYMPNRDSFEREYDPTAEQLISNISLSSEDTEVDVMLKLAHVDIYTRRLRERARRKRMVRDYQLVSNFFRNRNYAQQQGLTKEQREFRDRFRVYAQFYTCNEYERLLGSLEREKELRIRQSELYRYRYNGLTKIAECTHFEQHAATATHRSTGPYGHGKTDHTHTSNGSHRPPSSSLHSPQPNLRKVEMSSGGEASSNSIAPRNTLHIADPTCSGALLPSKNYLDSCRGSSAATMLQTTGMVMGVTVDSGATTGVTSTATTMANLPTNSAKGSQQHLQPLQQHPQLLQSGNQHKMQNEAAGGGSDQVPSMSLKLRTQLEELKHLPQPPGSELLSHNELDLCKKHNITPTTYLSVKTVCLSGAPSLGSPMETSLRKFFIKCGWLSH.

The ZZ-type zinc-finger motif lies at Phe-8 to Ser-63. The Zn(2+) site is built by Cys-13, Cys-16, Cys-27, Cys-30, Cys-36, Cys-39, His-49, and His-53. The 53-residue stretch at Arg-69–Thr-121 folds into the SANT domain. Residues Thr-318–Pro-372 are disordered. The span at Ser-339–Pro-352 shows a compositional bias: low complexity. Over residues Gly-363–Pro-372 the composition is skewed to polar residues.

Component of histone acetyltransferase complexes containing Gcn5 and Ada3. In terms of assembly, can heterooligomerize with Isoform A. Component of the Spt-Ada-Gcn5 acetyltransferase (SAGA) complex consisting of Ada1, Ada2b (Isoform B), Ada3, wda, Saf6, Spt3, Spt7, Spt20, Taf9, Taf10b, Taf12, Nipped-A/Tra1, Sf3b3, Sf3b5, not/nonstop, Sgf11, Sgf29, e(y)2, Atxn7 and Gcn5. Taf5 and Taf10, which has partially redundant properties with Taf10b, may also be part of this complex. Interacts (via C-terminus) with Spt3 and Taf12; the interactions are direct. Interacts with Ada3; the interaction is probably direct. May also interact directly with Spt7 and Gcn5. Interacts with p53. As to quaternary structure, can heterooligomerize with Isoform B. Component of the Chiffon histone acetyltransferase (CHAT) complex consisting of Ada3, Sgf29, Gcn5, chif/chiffon and Ada2b (Isoform A). Interacts (via N-terminus) with Gcn5 and Ada3; the interaction is direct. Can interact directly with Spt7 in vitro but in vivo this interaction is not stable probably due to the absence of other SAGA components. Interacts with p53. Expressed in nurse cells of stage 10 egg chambers and transcripts are dumped into the oocyte when nurse cells degenerate at late oogenesis.

The protein localises to the nucleus. Functionally, component of several Gcn5-containing histone acetyltransferase complexes that regulate nucleosome organization; involved in acetylation of histone H3, particularly on Lys-10 (H3K9ac) and Lys-15 (H3K14ac). Regulates the transcription of a subset of genes during development; affects recruitment of RNA polymerase II. May be involved in the function of some acidic activation domains, which activate transcription at distant sites. Involved in the p53-dependent apoptosis pathway response to DNA damage by genotoxic agents. Its function is as follows. Component of the SAGA histone acetyltransferase complex, which predominantly acetylates histone H3. Component of the CHAT histone acetyltransferase complex, which predominantly acetylates histone H3. This is Transcriptional adapter 2b from Drosophila melanogaster (Fruit fly).